We begin with the raw amino-acid sequence, 564 residues long: Dihydroxy-acid dehydratase (564 aa).

Position 53 (C53) interacts with [2Fe-2S] cluster. D85 is a binding site for Mg(2+). Residue C126 participates in [2Fe-2S] cluster binding. Mg(2+) contacts are provided by D127 and K128. At K128 the chain carries N6-carboxylysine. A [2Fe-2S] cluster-binding site is contributed by C203. Residue E454 coordinates Mg(2+). Catalysis depends on S480, which acts as the Proton acceptor.

The protein belongs to the IlvD/Edd family. Homodimer. Requires [2Fe-2S] cluster as cofactor. Mg(2+) is required as a cofactor.

It catalyses the reaction (2R)-2,3-dihydroxy-3-methylbutanoate = 3-methyl-2-oxobutanoate + H2O. The catalysed reaction is (2R,3R)-2,3-dihydroxy-3-methylpentanoate = (S)-3-methyl-2-oxopentanoate + H2O. Its pathway is amino-acid biosynthesis; L-isoleucine biosynthesis; L-isoleucine from 2-oxobutanoate: step 3/4. It participates in amino-acid biosynthesis; L-valine biosynthesis; L-valine from pyruvate: step 3/4. In terms of biological role, functions in the biosynthesis of branched-chain amino acids. Catalyzes the dehydration of (2R,3R)-2,3-dihydroxy-3-methylpentanoate (2,3-dihydroxy-3-methylvalerate) into 2-oxo-3-methylpentanoate (2-oxo-3-methylvalerate) and of (2R)-2,3-dihydroxy-3-methylbutanoate (2,3-dihydroxyisovalerate) into 2-oxo-3-methylbutanoate (2-oxoisovalerate), the penultimate precursor to L-isoleucine and L-valine, respectively. The protein is Dihydroxy-acid dehydratase of Mycobacterium leprae (strain TN).